Reading from the N-terminus, the 138-residue chain is Brain natriuretic peptide (138 aa).

The first 22 residues, 1–22, serve as a signal peptide directing secretion; that stretch reads MRLSSMWLCSLLLILKLQLSST. Disordered regions lie at residues 50–84 and 99–138; these read EQMA…AGLD and SVRN…PKQR. A disulfide bond links cysteine 111 and cysteine 127.

The protein belongs to the natriuretic peptide family.

The protein resides in the secreted. Its function is as follows. Cardiac hormone which may function as a paracrine antifibrotic factor in the heart. Also plays a key role in cardiovascular homeostasis through natriuresis, diuresis, vasorelaxation, and inhibition of renin and aldosterone secretion. This is Brain natriuretic peptide (nppb) from Oreochromis mossambicus (Mozambique tilapia).